The sequence spans 2571 residues: Stabilin-1 (2571 aa).

A signal peptide spans 1-25 (MAEPRTLLLLCVLVLCLSDSSFIRG). Residues 26-2475 (QTVRSKRCDI…RAVLGSEPPP (2450 aa)) are Extracellular-facing. EGF-like domains follow at residues 111–149 (FECP…SVCQ), 157–194 (FGPD…PHCD), 196–232 (ELPV…NVCL), and 233–272 (APDP…KVCL). Disulfide bonds link C113-C127, C121-C137, C139-C148, C161-C172, C165-C182, C184-C193, C200-C211, C205-C218, C220-C231, C237-C248, C242-C258, and C260-C271. 2 N-linked (GlcNAc...) asparagine glycosylation sites follow: N134 and N142. N-linked (GlcNAc...) asparagine glycosylation is found at N287, N313, N416, N607, N674, N713, and N746. 2 consecutive FAS1 domains span residues 357-495 (YGHL…TALR) and 507-642 (KKTV…EGIL). Residues 729–769 (DCTQCPGGFSNPCYGKGNCSDGVRGNGACLCFPDYKGIACH) form the EGF-like 5 domain. Intrachain disulfides connect C733/C747, C741/C757, and C759/C768. N817 carries N-linked (GlcNAc...) asparagine glycosylation. 4 EGF-like domains span residues 819–859 (SMGN…NGFS), 862–904 (RSNP…RICV), 905–947 (AIDE…YECS), and 948–987 (PIDP…DGFS). 10 disulfide bridges follow: C823-C838, C832-C847, C866-C880, C874-C890, C892-C903, C909-C923, C917-C933, C935-C946, C952-C965, and C959-C975. 2 FAS1 domains span residues 989–1119 (YGDI…SQVL) and 1129–1254 (GPGL…SGIL). 7 N-linked (GlcNAc...) asparagine glycosylation sites follow: N1011, N1088, N1097, N1171, N1179, N1223, and N1275. The Laminin EGF-like 1 domain occupies 1328–1393 (TLCEPCPGGL…CDCDHGLCQE (66 aa)). Intrachain disulfides connect C1333-C1347, C1341-C1357, C1359-C1368, C1380-C1391, C1384-C1401, C1403-C1412, C1421-C1431, C1425-C1441, C1443-C1454, C1460-C1473, C1467-C1483, C1485-C1496, C1502-C1515, C1509-C1525, C1527-C1539, C1545-C1558, C1552-C1568, and C1570-C1582. A glycan (N-linked (GlcNAc...) asparagine) is linked at N1398. 4 EGF-like domains span residues 1417-1455 (TDHQ…SYCS), 1456-1497 (EVDP…ELCQ), 1498-1540 (EINS…QTCK), and 1541-1583 (LLDP…ITCH). 2 N-linked (GlcNAc...) asparagine glycosylation sites follow: N1450 and N1472. FAS1 domains are found at residues 1583–1709 (HGRV…DHVL) and 1725–1865 (PQRN…DQLL). N-linked (GlcNAc...) asparagine glycans are attached at residues N1627 and N1728. The Laminin EGF-like 2 domain maps to 1966–2031 (INCHACPGGP…RCTQHGRCDE (66 aa)). 17 disulfide bridges follow: C1971-C1985, C1979-C1995, C1997-C2006, C2018-C2029, C2023-C2039, C2041-C2050, C2060-C2070, C2064-C2076, C2078-C2089, C2095-C2108, C2102-C2117, C2119-C2130, C2136-C2150, C2144-C2160, C2162-C2173, C2230-C2299, and C2254-C2275. EGF-like domains follow at residues 2056–2090 (LQPV…RVCT), 2091–2131 (VADL…WSCR), and 2132–2174 (ARDP…LQCL). The N-linked (GlcNAc...) asparagine glycan is linked to N2107. Residues 2208–2301 (GVFHIQATSG…SELWDAYCYR (94 aa)) form the Link domain. N2261, N2290, N2334, N2347, N2379, N2393, N2400, and N2424 each carry an N-linked (GlcNAc...) asparagine glycan. An FAS1 7 domain is found at 2322–2459 (NGKLLDVLAA…GIIHALASPL (138 aa)). Residues 2476–2496 (VALSLGVVVTSGTLLGLVAGA) form a helical membrane-spanning segment. The Cytoplasmic portion of the chain corresponds to 2497-2571 (LYLRARGKPP…PDTQRVLKVK (75 aa)).

As to quaternary structure, interacts with CHID1.

The protein resides in the membrane. Its function is as follows. Acts as a scavenger receptor for acetylated low density lipoprotein. Binds to both Gram-positive and Gram-negative bacteria and may play a role in defense against bacterial infection. When inhibited in endothelial tube formation assays, there is a marked decrease in cell-cell interactions, suggesting a role in angiogenesis. Involved in the delivery of newly synthesized CHID1/SI-CLP from the biosynthetic compartment to the endosomal/lysosomal system. In Mus musculus (Mouse), this protein is Stabilin-1 (Stab1).